A 2073-amino-acid chain; its full sequence is Dedicator of cytokinesis protein 11 (2073 aa).

Serine 12 is subject to Phosphoserine. Threonine 16 carries the phosphothreonine modification. A phosphoserine mark is found at serine 23 and serine 161. The PH domain maps to 165–272 (GVIKQGWLHK…WLIMLKKIIQ (108 aa)). Phosphotyrosine is present on tyrosine 248. Phosphoserine is present on residues serine 306 and serine 445. Positions 640–818 (KNHLYVYPLQ…PLLKIKTHLE (179 aa)) constitute a C2 DOCK-type domain. A disordered region spans residues 1227–1267 (QNGHGIKREDSRGSLIPEGATGFPDPGSTSENTRQSSSRSS). 2 positions are modified to phosphoserine: serine 1237 and serine 1240. Over residues 1254–1267 (STSENTRQSSSRSS) the composition is skewed to low complexity. In terms of domain architecture, DOCKER spans 1609 to 2036 (KSYASTPELR…LSDIIHEQIL (428 aa)).

The protein belongs to the DOCK family. In terms of assembly, interacts with CDC42. In terms of tissue distribution, expressed in spleen, thymus, mesenteric lymph nodes (MLN), bone marrow and peripheral blood lymphocytes. Enriched in B-cells from germinal centers. Expressed in B-, T- and dendritic cells as well as Purkinje cells.

Guanine nucleotide-exchange factor (GEF) that activates CDC42 by exchanging bound GDP for free GTP. Required for marginal zone (MZ) B-cell development, is associated with early bone marrow B-cell development, MZ B-cell formation, MZ B-cell number and marginal metallophilic macrophages morphology. Facilitates filopodia formation through the activation of CDC42. This Mus musculus (Mouse) protein is Dedicator of cytokinesis protein 11.